The primary structure comprises 195 residues: UPF0314 protein RL4541 (195 aa).

4 consecutive transmembrane segments (helical) span residues 15–35 (FWFV…YMMG), 64–84 (WYTP…HLIL), 127–147 (GDSI…FFFA), and 150–170 (APVA…GYII).

Belongs to the UPF0314 family.

It is found in the cell membrane. This is UPF0314 protein RL4541 from Rhizobium johnstonii (strain DSM 114642 / LMG 32736 / 3841) (Rhizobium leguminosarum bv. viciae).